The following is a 402-amino-acid chain: APO protein 3, mitochondrial (402 aa).

Residues 1 to 13 (MQRRKLVEISIFV) constitute a mitochondrion transit peptide. Residues 37–59 (NDEDPLYADVPKPPKDKSERKPY) form a disordered region. The segment covering 48–58 (KPPKDKSERKP) has biased composition (basic and acidic residues). 2 consecutive APO domains span residues 127–213 (RCRL…DLEK) and 294–380 (TCGY…PVPD).

The protein belongs to the APO family.

The protein resides in the mitochondrion. May be involved in the stable assembly of several 4Fe-4S cluster-containing complexes of mitochondria. The polypeptide is APO protein 3, mitochondrial (APO3) (Arabidopsis thaliana (Mouse-ear cress)).